Consider the following 214-residue polypeptide: Adenylate kinase (214 aa).

10-15 lines the ATP pocket; the sequence is GAGKGT. An NMP region spans residues 30–59; it reads STGDMLRAAVKAGTPLGLEAKKVMDAGQLV. AMP contacts are provided by residues Thr-31, Arg-36, 57–59, 85–88, and Gln-92; these read QLV and GFPR. Residues 122–159 form an LID region; that stretch reads GRRVHPGSGRVYHVVFNPPKVEGKDDVTGEDLAIRPDD. ATP contacts are provided by residues Arg-123 and 132–133; that span reads VY. 2 residues coordinate AMP: Arg-156 and Arg-167. Gln-200 is an ATP binding site.

Belongs to the adenylate kinase family. Monomer.

It is found in the cytoplasm. It carries out the reaction AMP + ATP = 2 ADP. Its pathway is purine metabolism; AMP biosynthesis via salvage pathway; AMP from ADP: step 1/1. In terms of biological role, catalyzes the reversible transfer of the terminal phosphate group between ATP and AMP. Plays an important role in cellular energy homeostasis and in adenine nucleotide metabolism. The protein is Adenylate kinase of Shewanella oneidensis (strain ATCC 700550 / JCM 31522 / CIP 106686 / LMG 19005 / NCIMB 14063 / MR-1).